Consider the following 509-residue polypeptide: GMP synthase [glutamine-hydrolyzing] (509 aa).

The 191-residue stretch at 4-194 folds into the Glutamine amidotransferase type-1 domain; the sequence is LVLVVDFGGQ…LYNICGLENS (191 aa). Cys81 (nucleophile) is an active-site residue. Active-site residues include His168 and Glu170. Residues 195–384 enclose the GMPS ATP-PPase domain; that stretch reads WSMASFAEEK…LGIPHHLVWR (190 aa). 222-228 serves as a coordination point for ATP; sequence SGGVDSS.

In terms of assembly, homodimer.

The enzyme catalyses XMP + L-glutamine + ATP + H2O = GMP + L-glutamate + AMP + diphosphate + 2 H(+). The protein operates within purine metabolism; GMP biosynthesis; GMP from XMP (L-Gln route): step 1/1. In terms of biological role, catalyzes the synthesis of GMP from XMP. The sequence is that of GMP synthase [glutamine-hydrolyzing] from Clostridium perfringens (strain 13 / Type A).